The primary structure comprises 189 residues: GTP cyclohydrolase 1 (189 aa).

3 residues coordinate Zn(2+): cysteine 78, histidine 81, and cysteine 150.

This sequence belongs to the GTP cyclohydrolase I family. Homomer.

The catalysed reaction is GTP + H2O = 7,8-dihydroneopterin 3'-triphosphate + formate + H(+). It participates in cofactor biosynthesis; 7,8-dihydroneopterin triphosphate biosynthesis; 7,8-dihydroneopterin triphosphate from GTP: step 1/1. The protein is GTP cyclohydrolase 1 of Bacillus anthracis (strain A0248).